The sequence spans 315 residues: 4-diphosphocytidyl-2-C-methyl-D-erythritol kinase (315 aa).

Lys-26 is an active-site residue. 111–121 (PLAGGLAGGSA) contacts ATP. Asp-153 is an active-site residue.

It belongs to the GHMP kinase family. IspE subfamily.

It carries out the reaction 4-CDP-2-C-methyl-D-erythritol + ATP = 4-CDP-2-C-methyl-D-erythritol 2-phosphate + ADP + H(+). It participates in isoprenoid biosynthesis; isopentenyl diphosphate biosynthesis via DXP pathway; isopentenyl diphosphate from 1-deoxy-D-xylulose 5-phosphate: step 3/6. Functionally, catalyzes the phosphorylation of the position 2 hydroxy group of 4-diphosphocytidyl-2C-methyl-D-erythritol. The polypeptide is 4-diphosphocytidyl-2-C-methyl-D-erythritol kinase (Salinispora tropica (strain ATCC BAA-916 / DSM 44818 / JCM 13857 / NBRC 105044 / CNB-440)).